The following is a 334-amino-acid chain: SH3 and cysteine-rich domain-containing protein 3 (334 aa).

The interval 1-26 is disordered; the sequence is MAQYDQLEDKDSLDIHDNPPAPENVV. A compositionally biased stretch (basic and acidic residues) spans 7–17; that stretch reads LEDKDSLDIHD. The Phorbol-ester/DAG-type zinc-finger motif lies at 62–113; sequence PHKFKDHYCKKPKFCDVCARMIVLNNKFALRCKNCKTNIHHSCQSYVQFQRC. The span at 178 to 190 shows a compositional bias: acidic residues; that stretch reads EEEAQQPKEDEEG. The interval 178–215 is disordered; it reads EEEAQQPKEDEEGAEGKQDGDKKDKTATDDKNKKQQQT. Over residues 191-210 the composition is skewed to basic and acidic residues; that stretch reads AEGKQDGDKKDKTATDDKNK. 2 consecutive SH3 domains span residues 217–276 and 277–334; these read SQSH…RVRA and GERV…LHEL.

In terms of assembly, component of a calcium channel complex with CACNA1S. Expressed in muscles at the muscle triad.

It localises to the cytoplasm. It is found in the cell membrane. Its subcellular location is the sarcolemma. The protein resides in the T-tubule. Its function is as follows. Required for normal excitation-contraction coupling in skeletal muscle and for normal muscle contraction in response to membrane depolarization. Required for normal Ca(2+) release from the sarcplasmic reticulum, which ultimately leads to muscle contraction. Probably functions via its effects on muscle calcium channels. Increases CACNA1S channel activity, in addition to its role in enhancing the expression of CACNA1S at the cell membrane. Has a redundant role in promoting the expression of the calcium channel CACNA1S at the cell membrane. The protein is SH3 and cysteine-rich domain-containing protein 3 of Danio rerio (Zebrafish).